A 439-amino-acid polypeptide reads, in one-letter code: Trigger factor (439 aa).

One can recognise a PPIase FKBP-type domain in the interval 165–250 (GDFAKFDFEG…LHEIQELKLP (86 aa)).

Belongs to the FKBP-type PPIase family. Tig subfamily.

It localises to the cytoplasm. The catalysed reaction is [protein]-peptidylproline (omega=180) = [protein]-peptidylproline (omega=0). Its function is as follows. Involved in protein export. Acts as a chaperone by maintaining the newly synthesized protein in an open conformation. Functions as a peptidyl-prolyl cis-trans isomerase. The protein is Trigger factor of Campylobacter lari (strain RM2100 / D67 / ATCC BAA-1060).